The following is a 385-amino-acid chain: Glycerol-3-phosphate dehydrogenase [NAD(+)] 1 (385 aa).

NAD(+) is bound by residues 29-34, Phe121, Lys144, and Ala177; that span reads GSGNWG. Position 144 (Lys144) interacts with substrate. Catalysis depends on Lys232, which acts as the Proton acceptor. Positions 296 and 325 each coordinate NAD(+). 296–297 contacts substrate; that stretch reads RN. Ser376 carries the post-translational modification Phosphoserine. Thr382 is modified (phosphothreonine).

This sequence belongs to the NAD-dependent glycerol-3-phosphate dehydrogenase family.

Its subcellular location is the cytoplasm. The enzyme catalyses sn-glycerol 3-phosphate + NAD(+) = dihydroxyacetone phosphate + NADH + H(+). This is Glycerol-3-phosphate dehydrogenase [NAD(+)] 1 (gpd1) from Schizosaccharomyces pombe (strain 972 / ATCC 24843) (Fission yeast).